The chain runs to 187 residues: MTATILVEKQKVDRPPLELHYLGDKVLRQPAKRIAKVDDSIRKLAKEMLQTMYSANGIGLAAPQVGINKQLLVVDCEQDKPDEPPLIMINPQITRTSEELCVVEEGCLSVPNVYMDVTRPRAIEVTYKDEHGRPQKRLFAELTARVIQHEMDHLNGVMFVDRVDNPLALAESLKKEGFSMQAVKPVA.

Residues Cys-107 and His-149 each coordinate Fe cation. The active site involves Glu-150. His-153 serves as a coordination point for Fe cation.

It belongs to the polypeptide deformylase family. It depends on Fe(2+) as a cofactor.

The enzyme catalyses N-terminal N-formyl-L-methionyl-[peptide] + H2O = N-terminal L-methionyl-[peptide] + formate. Removes the formyl group from the N-terminal Met of newly synthesized proteins. Requires at least a dipeptide for an efficient rate of reaction. N-terminal L-methionine is a prerequisite for activity but the enzyme has broad specificity at other positions. The protein is Peptide deformylase of Synechocystis sp. (strain ATCC 27184 / PCC 6803 / Kazusa).